Reading from the N-terminus, the 493-residue chain is Glutamyl-tRNA(Gln) amidotransferase subunit A (493 aa).

Catalysis depends on charge relay system residues K78 and S158. The Acyl-ester intermediate role is filled by S182.

This sequence belongs to the amidase family. GatA subfamily. In terms of assembly, heterotrimer of A, B and C subunits.

The enzyme catalyses L-glutamyl-tRNA(Gln) + L-glutamine + ATP + H2O = L-glutaminyl-tRNA(Gln) + L-glutamate + ADP + phosphate + H(+). Allows the formation of correctly charged Gln-tRNA(Gln) through the transamidation of misacylated Glu-tRNA(Gln) in organisms which lack glutaminyl-tRNA synthetase. The reaction takes place in the presence of glutamine and ATP through an activated gamma-phospho-Glu-tRNA(Gln). This chain is Glutamyl-tRNA(Gln) amidotransferase subunit A, found in Azorhizobium caulinodans (strain ATCC 43989 / DSM 5975 / JCM 20966 / LMG 6465 / NBRC 14845 / NCIMB 13405 / ORS 571).